The following is a 125-amino-acid chain: Small ribosomal subunit protein mS41 (125 aa).

The transit peptide at 1–10 directs the protein to the mitochondrion; that stretch reads MLSIFGCVRA. The segment at 103 to 125 is disordered; the sequence is SFFGGERNRKATVAKWRAEQRNK.

The protein belongs to the mitochondrion-specific ribosomal protein mS41 family.

Its subcellular location is the mitochondrion. Involved in telomere length regulation. In Candida glabrata (strain ATCC 2001 / BCRC 20586 / JCM 3761 / NBRC 0622 / NRRL Y-65 / CBS 138) (Yeast), this protein is Small ribosomal subunit protein mS41 (FYV4).